The chain runs to 89 residues: Small ribosomal subunit protein uS15 (89 aa).

Over residues 1–21 (MAITQERKNQLINEFKTHESD) the composition is skewed to basic and acidic residues. The tract at residues 1-24 (MAITQERKNQLINEFKTHESDTGS) is disordered.

This sequence belongs to the universal ribosomal protein uS15 family. Part of the 30S ribosomal subunit. Forms a bridge to the 50S subunit in the 70S ribosome, contacting the 23S rRNA.

In terms of biological role, one of the primary rRNA binding proteins, it binds directly to 16S rRNA where it helps nucleate assembly of the platform of the 30S subunit by binding and bridging several RNA helices of the 16S rRNA. Functionally, forms an intersubunit bridge (bridge B4) with the 23S rRNA of the 50S subunit in the ribosome. This Bacillus subtilis (strain 168) protein is Small ribosomal subunit protein uS15.